Here is a 382-residue protein sequence, read N- to C-terminus: Homoserine O-succinyltransferase (382 aa).

The region spanning 51–359 is the AB hydrolase-1 domain; it reads NAILVCHALS…EATQGHDAFL (309 aa). S157 acts as the Nucleophile in catalysis. R227 contributes to the substrate binding site. Active-site residues include D322 and H355. D356 is a binding site for substrate.

The protein belongs to the AB hydrolase superfamily. MetX family. Homodimer.

It is found in the cytoplasm. The catalysed reaction is L-homoserine + succinyl-CoA = O-succinyl-L-homoserine + CoA. Its pathway is amino-acid biosynthesis; L-methionine biosynthesis via de novo pathway; O-succinyl-L-homoserine from L-homoserine: step 1/1. Functionally, transfers a succinyl group from succinyl-CoA to L-homoserine, forming succinyl-L-homoserine. The polypeptide is Homoserine O-succinyltransferase (Halorhodospira halophila (strain DSM 244 / SL1) (Ectothiorhodospira halophila (strain DSM 244 / SL1))).